Reading from the N-terminus, the 499-residue chain is Sensor histidine kinase PdtaS (499 aa).

Residues 4–149 form a GAF region; the sequence is LGDLLAEHTM…PLEGAYLDCA (146 aa). The PAS-like stretch occupies residues 178 to 289; sequence DGFIRLNEGG…TEVKRRDRAL (112 aa). In terms of domain architecture, Histidine kinase spans 298 to 493; the sequence is EIHHRVKNNL…DVVLRVPIGR (196 aa). His-301 carries the post-translational modification Phosphohistidine; by autocatalysis.

In terms of processing, autophosphorylated.

The protein resides in the cytoplasm. The catalysed reaction is ATP + protein L-histidine = ADP + protein N-phospho-L-histidine.. In terms of biological role, member of the two-component regulatory system PdtaR/PdtaS. This two-component system plays an essential role in mycobacterial adaptation to poor nutrient conditions. Nutrient deprivation results in increasing intracellular concentrations of cyclic diguanosine monophosphate (c-di-GMP), which binds to the PdtaS sensor and promotes its autophosphorylation, leading to the activation of the signaling cascade. The phosphate group is then transferred to PdtaR. The protein is Sensor histidine kinase PdtaS of Mycolicibacterium smegmatis (strain ATCC 700084 / mc(2)155) (Mycobacterium smegmatis).